Consider the following 292-residue polypeptide: Galactinol synthase 2 (292 aa).

The active site involves lysine 65. Mn(2+) contacts are provided by aspartate 81, aspartate 83, and histidine 218.

This sequence belongs to the glycosyltransferase 8 family. Galactosyltransferase subfamily. Requires a divalent metal cation as cofactor. Present in phloem-associated intermediary cells. Weakly expressed in leaves.

The protein resides in the cytoplasm. It catalyses the reaction myo-inositol + UDP-alpha-D-galactose = alpha-D-galactosyl-(1-&gt;3)-1D-myo-inositol + UDP + H(+). Its function is as follows. May promote plant stress tolerance. Galactinol synthase mainly involved in the biosynthesis of transport raffinose family oligosaccharides (RFOs) that function as osmoprotectants. This Ajuga reptans (Bugle) protein is Galactinol synthase 2 (GOLS2).